The sequence spans 487 residues: Dihydrofolate synthase/folylpolyglutamate synthase (487 aa).

Residue 44 to 46 participates in 7,8-dihydropteroate binding; it reads DPS. 74-77 contributes to the ATP binding site; it reads GKTS. Mg(2+) is bound by residues Thr-76 and Ser-98. 150–153 lines the 7,8-dihydropteroate pocket; it reads SKFE. Position 174 (Glu-174) interacts with Mg(2+). 181–183 is a 7,8-dihydropteroate binding site; sequence WDA. The Mg(2+) site is built by His-201 and Asp-203. ATP-binding positions include Asn-301, Arg-338, and 351-354; that span reads DAAH. Asp-384 contributes to the Mg(2+) binding site.

Belongs to the folylpolyglutamate synthase family. In terms of assembly, monomer. Mg(2+) serves as cofactor.

The catalysed reaction is 7,8-dihydropteroate + L-glutamate + ATP = 7,8-dihydrofolate + ADP + phosphate + H(+). The enzyme catalyses (6S)-5,6,7,8-tetrahydrofolyl-(gamma-L-Glu)(n) + L-glutamate + ATP = (6S)-5,6,7,8-tetrahydrofolyl-(gamma-L-Glu)(n+1) + ADP + phosphate + H(+). It participates in cofactor biosynthesis; tetrahydrofolate biosynthesis; 7,8-dihydrofolate from 2-amino-4-hydroxy-6-hydroxymethyl-7,8-dihydropteridine diphosphate and 4-aminobenzoate: step 2/2. Its pathway is cofactor biosynthesis; tetrahydrofolylpolyglutamate biosynthesis. Its function is as follows. Catalyzes the addition of a glutamate residue to dihydropteroate (7,8-dihydropteroate or H2Pte) to form dihydrofolate (7,8-dihydrofolate monoglutamate or H2Pte-Glu). Also catalyzes successive additions of L-glutamate to tetrahydrofolate, leading to folylpolyglutamate derivatives. Is involved in the bioactivation of the antituberculous drug para-aminosalicylic acid (PAS). Is able to use hydroxy-dihydropteroate (H2PtePAS) as substrate, which is the product formed by the action of DHPS (FolP1) on PAS, leading to hydroxy-dihydrofolate (H2PtePAS-Glu). This compound inhibits dihydrofolate reductase DHFR (DfrA), the next enzyme in the folate pathway, and thus disrupts the folate-dependent metabolic pathways. The sequence is that of Dihydrofolate synthase/folylpolyglutamate synthase from Mycobacterium tuberculosis (strain ATCC 25618 / H37Rv).